A 194-amino-acid polypeptide reads, in one-letter code: Inosine triphosphate pyrophosphatase (194 aa).

An ITP-binding site is contributed by 10–15 (TGNANK). E41 is a binding site for Mg(2+). ITP is bound by residues K54, 72 to 73 (DT), K89, 147 to 150 (FGWD), K172, and 177 to 178 (QR).

The protein belongs to the HAM1 NTPase family. Homodimer. Mg(2+) serves as cofactor. It depends on Mn(2+) as a cofactor.

It is found in the cytoplasm. The protein resides in the nucleus. It carries out the reaction ITP + H2O = IMP + diphosphate + H(+). The catalysed reaction is dITP + H2O = dIMP + diphosphate + H(+). The enzyme catalyses XTP + H2O = XMP + diphosphate + H(+). Functionally, pyrophosphatase that hydrolyzes non-canonical purine nucleotides such as inosine triphosphate (ITP), deoxyinosine triphosphate (dITP) or xanthosine 5'-triphosphate (XTP) to their respective monophosphate derivatives. The enzyme does not distinguish between the deoxy- and ribose forms. Probably excludes non-canonical purines from RNA and DNA precursor pools, thus preventing their incorporation into RNA and DNA and avoiding chromosomal lesions. The sequence is that of Inosine triphosphate pyrophosphatase from Kluyveromyces lactis (strain ATCC 8585 / CBS 2359 / DSM 70799 / NBRC 1267 / NRRL Y-1140 / WM37) (Yeast).